Reading from the N-terminus, the 135-residue chain is Classical arabinogalactan protein 4 (135 aa).

The first 21 residues, 1 to 21, serve as a signal peptide directing secretion; the sequence is MGSKIVQVFLMLALFATSALA. Gln22 is subject to Pyrrolidone carboxylic acid. Residues 22–112 are disordered; it reads QAPAPTPTAT…PSDASPAPSA (91 aa). Pro24, Pro26, Pro28, Pro32, Pro33, Pro34, Pro37, Pro38, and Pro39 each carry 4-hydroxyproline. 9 O-linked (Ara...) hydroxyproline glycosylation sites follow: Pro24, Pro26, Pro28, Pro32, Pro33, Pro34, Pro37, Pro38, and Pro39. Over residues 25-76 the composition is skewed to pro residues; the sequence is APTPTATPPPATPPPVATPPPVATPPPAATPAPATPPPAATPAPATTPPSVA. The span at 96–112 shows a compositional bias: low complexity; sequence SPSSAPGPSDASPAPSA. A lipid anchor (GPI-anchor amidated serine) is attached at Ser111. Residues 112–135 constitute a propeptide, removed in mature form; the sequence is AAFSNKAFFAGTAFAAIMYAAVLA.

It belongs to the classical AGP family. In terms of processing, O-glycosylated on hydroxyprolines; noncontiguous hydroxylproline residues are glycosylated with arabinogalactan. Highly expressed in roots, flowers and leaves.

It localises to the cell membrane. In terms of biological role, proteoglycan that seems to be implicated in diverse developmental roles such as differentiation, cell-cell recognition, embryogenesis and programmed cell death. The chain is Classical arabinogalactan protein 4 (AGP4) from Arabidopsis thaliana (Mouse-ear cress).